The chain runs to 340 residues: tRNA N6-adenosine threonylcarbamoyltransferase (340 aa).

Fe cation-binding residues include His-109 and His-113. Residues 132–136 (AISGA), Asp-165, Gly-178, and Asn-277 contribute to the substrate site. Asp-302 serves as a coordination point for Fe cation.

This sequence belongs to the KAE1 / TsaD family. Fe(2+) is required as a cofactor.

Its subcellular location is the cytoplasm. It carries out the reaction L-threonylcarbamoyladenylate + adenosine(37) in tRNA = N(6)-L-threonylcarbamoyladenosine(37) in tRNA + AMP + H(+). Required for the formation of a threonylcarbamoyl group on adenosine at position 37 (t(6)A37) in tRNAs that read codons beginning with adenine. Is involved in the transfer of the threonylcarbamoyl moiety of threonylcarbamoyl-AMP (TC-AMP) to the N6 group of A37, together with TsaE and TsaB. TsaD likely plays a direct catalytic role in this reaction. The polypeptide is tRNA N6-adenosine threonylcarbamoyltransferase (Chlamydia muridarum (strain MoPn / Nigg)).